A 140-amino-acid polypeptide reads, in one-letter code: Large ribosomal subunit protein uL11 (140 aa).

It belongs to the universal ribosomal protein uL11 family. As to quaternary structure, part of the ribosomal stalk of the 50S ribosomal subunit. Interacts with L10 and the large rRNA to form the base of the stalk. L10 forms an elongated spine to which L12 dimers bind in a sequential fashion forming a multimeric L10(L12)X complex. In terms of processing, one or more lysine residues are methylated.

Its function is as follows. Forms part of the ribosomal stalk which helps the ribosome interact with GTP-bound translation factors. This Pelobacter propionicus (strain DSM 2379 / NBRC 103807 / OttBd1) protein is Large ribosomal subunit protein uL11.